Reading from the N-terminus, the 208-residue chain is Outer-membrane lipoprotein carrier protein (208 aa).

Residues 1-22 form the signal peptide; sequence MKNLLCAVMLTSPLLYSTAVFA.

The protein belongs to the LolA family. Monomer.

The protein resides in the periplasm. Functionally, participates in the translocation of lipoproteins from the inner membrane to the outer membrane. Only forms a complex with a lipoprotein if the residue after the N-terminal Cys is not an aspartate (The Asp acts as a targeting signal to indicate that the lipoprotein should stay in the inner membrane). This chain is Outer-membrane lipoprotein carrier protein, found in Shewanella putrefaciens (strain CN-32 / ATCC BAA-453).